The primary structure comprises 318 residues: Dehydrogenase/reductase SDR family member 7C-B (318 aa).

Residues 1 to 32 (MGMSDIMWLDVSWAWLVLTAVLLAAAVFYLYT) form the signal peptide. 49–73 (LITDSLSTVGNECAKLFHAGGARLI) provides a ligand contact to NAD(+). Serine 186 contributes to the substrate binding site. Tyrosine 199 acts as the Proton acceptor in catalysis.

Belongs to the short-chain dehydrogenases/reductases (SDR) family.

Its subcellular location is the secreted. Putative oxidoreductase. The polypeptide is Dehydrogenase/reductase SDR family member 7C-B (dhrs7cb) (Danio rerio (Zebrafish)).